The following is a 496-amino-acid chain: Catalase isozyme 3 (496 aa).

The tract at residues 1-25 (MTMDPTKFRPSSSHDTTVTTTNAGA) is disordered. The segment covering 9-23 (RPSSSHDTTVTTTNA) has biased composition (polar residues). Active-site residues include H67 and N140. Y351 lines the heme pocket. The tract at residues 402 to 422 (PLRQAAPPTPLPPRPVAGRRE) is disordered.

This sequence belongs to the catalase family. In terms of assembly, homotetramer. Heme is required as a cofactor. Leaf mesophyll cells, pericarp, seedling roots and the coleoptile.

It is found in the mitochondrion. The catalysed reaction is 2 H2O2 = O2 + 2 H2O. In terms of biological role, occurs in almost all aerobically respiring organisms and serves to protect cells from the toxic effects of hydrogen peroxide. Its levels are highest in the light period and are lowest in the dark period, hence it may be important for scavenging hydrogen peroxide at night, rather than during the day. The protein is Catalase isozyme 3 (CAT3) of Zea mays (Maize).